Consider the following 85-residue polypeptide: Probable weak neurotoxin 3FTx-Lio1 (85 aa).

A signal peptide spans 1–18 (MKAVILSLVAAFLYSGYT). 5 disulfides stabilise this stretch: Cys21-Cys42, Cys24-Cys29, Cys35-Cys60, Cys64-Cys75, and Cys76-Cys81.

It belongs to the three-finger toxin family. Ancestral subfamily. Expressed by the venom gland.

Its subcellular location is the secreted. The chain is Probable weak neurotoxin 3FTx-Lio1 from Erythrolamprus poecilogyrus (Water snake).